We begin with the raw amino-acid sequence, 76 residues long: Tautomerase PptA (76 aa).

Pro-2 acts as the Proton acceptor; via imino nitrogen in catalysis.

The protein belongs to the 4-oxalocrotonate tautomerase family. PptA subfamily. Homodimer.

The protein resides in the cytoplasm. The polypeptide is Tautomerase PptA (Pectobacterium atrosepticum (strain SCRI 1043 / ATCC BAA-672) (Erwinia carotovora subsp. atroseptica)).